Reading from the N-terminus, the 233-residue chain is Adenylyl cyclase-associated protein 1 (233 aa).

Position 14 is a phosphotyrosine (Tyr14). Ser17 carries the post-translational modification Phosphoserine. Disordered regions lie at residues 43–71 (VDKXGPVAKELSGLPSGPSAGSGPPPSAL) and 91–129 (DEKTHKNPADKAQSGPVRXGPKPFSASKPGISPSPKPVT). Low complexity predominate over residues 53–64 (LSGLPSGPSAGS). The residue at position 101 (Lys101) is an N6-methyllysine. Residues Ser104, Ser115, Ser122, and Ser124 each carry the phosphoserine modification. Lys151 participates in a covalent cross-link: Glycyl lysine isopeptide (Lys-Gly) (interchain with G-Cter in SUMO1). A C-CAP/cofactor C-like domain is found at 173–221 (VPXISINKXDGRHIYLSKNSLDCEIVSAKSSEMNVLIPTEGGDFNEFPV).

This sequence belongs to the CAP family. Homodimer. Binds actin monomers.

Its subcellular location is the cell membrane. Directly regulates filament dynamics and has been implicated in a number of complex developmental and morphological processes, including mRNA localization and the establishment of cell polarity. The protein is Adenylyl cyclase-associated protein 1 (CAP1) of Sus scrofa (Pig).